Here is a 594-residue protein sequence, read N- to C-terminus: MWSRRIPLFIFGVLVLILSVAAEDVVWRWSCDNGKCVKLKNDPRSSEPALSLEACKMFCNEYGLLWPRPTGEADLGNFLSKINLNSIEVKILKKGATDDLMEAAAKRFKEQVSLAIPRGSTPKLTGKAVDVYLVNENPNEKAFSLEMDESYGLRVSPSGADRVNATITANSFFGMRHGLETLSQLFVFDDIRDHLLMVRDVNISDKPVYPYRGILLDTARNYYSIESIKRTIEAMAAVKLNTFHWHITDSQSFPFVTTKRPNLYKFGALSPQKVYTKAAIREVVRFGLERGVRVLPEFDAPAHVGEGWQDTDLTVCFKAEPWKSYCVEPPCGQLNPTKDELYQYLEDIYSDMAEVFDTTDIFHMGGDEVSEACWNSSDSIQNFMMQNRWDLDKESFLKLWNYFQQKAQDKAYKAFGKKLPLILWTSTLTNYKHIDDYLNKDDYIIQVWTTGVDPQIKGLLEKGYRLIMSNYDALYFDCGYGAWVGAGNNWCSPYIGWQKVYDNSPAVIALEHRDQVLGGEAALWSEQSDTSTLDGRLWPRAAALAERLWAEPATSWQDAEYRMLHIRERLVRMGIQAESLQPEWCYQNEGYCYS.

An N-terminal signal peptide occupies residues 1–22 (MWSRRIPLFIFGVLVLILSVAA). Cystine bridges form between Cys-31–Cys-59 and Cys-36–Cys-55. Asn-164 is a glycosylation site (N-linked (GlcNAc...) asparagine). Residues Asp-249 and His-303 each act as charge relay system in the active site. Disulfide bonds link Cys-316–Cys-373 and Cys-326–Cys-331. Catalysis depends on Glu-368, which acts as the Charge relay system. N-linked (GlcNAc...) asparagine glycosylation occurs at Asn-375. Cystine bridges form between Cys-478–Cys-491 and Cys-585–Cys-592.

Belongs to the glycosyl hydrolase 20 family. Homodimer.

It catalyses the reaction Hydrolysis of terminal non-reducing N-acetyl-D-hexosamine residues in N-acetyl-beta-D-hexosaminides.. Its activity is regulated as follows. Inhibited by O-(2-acetamido-2-deoxy-D-glucopyransylidene)-amino-N-phenylcarbamate (PUGNAc). Inhibited by thiabendazole (TMG)-chitotriomycin. Inhibited by 6-(dimethylamino)-2-(2-(((5-methyl-1,3,4-thiadiazol-2-yl)methyl)amino)ethyl)- 1H-benzo[de]isoquinoline-1,3(2H)-dione (Q2), a synthesized non-carbohydrate unsymmetrical dyad of naphthalimide and thiadiazole having a dimethylamino group at C4 of the naphthalimide. Inhibited poorly by N-acetyl-glucosamine (NAG)-thiazoline (NGT), but when the thiazoline ring of NGT is replaced by a bulky substituent such as in compound 1,2-dideoxy-2'-methylamino-alpha-D-glucopyranoso-[2,1-d]-Delta2'-thiazoline (NMAGT), the inhibition constant Ki is lowered 600-fold compared to that of NGT. Inhibited by berberine, berberine analogs thalifendine and palmatine, and berberine derivative SYSU-1, but not by berberine analog tetrahydroberberine. Hydrolyzes one beta-GlcNAc unit at a time from the non-reducing ends of substrates, with a preference for shorter substrates. The 2-acetamido group and the beta-glycoside bond linkage in the substrate are required for its activity. Active with p-nitrophenyl (pNP)-beta-GlcNAc, pNP-beta-GalNAc and chitooligosaccharides (degree of polymerization from 2 to 6), but not with the complex N-glycan substrate (GlcNAcbeta-1,2Manalpha-1,6)(GlcNAcbeta-1,2Manalpha-1,3)Manbeta-1,4GlcNAcbeta-1,4GlcNAc-PA (GnGn-PA), pNP-alpha-GlcNAc or with the long polymer colloidal chitin. Involved in chitin catabolism. Involved in the degradation of old cuticle during the pupation stage. This chain is Chitooligosaccharidolytic beta-N-acetylglucosaminidase, found in Ostrinia furnacalis (Asian corn borer).